Reading from the N-terminus, the 705-residue chain is 1,4-alpha-glucan branching enzyme GlgB (705 aa).

Aspartate 393 serves as the catalytic Nucleophile. Catalysis depends on glutamate 446, which acts as the Proton donor.

It belongs to the glycosyl hydrolase 13 family. GlgB subfamily. As to quaternary structure, monomer.

It carries out the reaction Transfers a segment of a (1-&gt;4)-alpha-D-glucan chain to a primary hydroxy group in a similar glucan chain.. It participates in glycan biosynthesis; glycogen biosynthesis. In terms of biological role, catalyzes the formation of the alpha-1,6-glucosidic linkages in glycogen by scission of a 1,4-alpha-linked oligosaccharide from growing alpha-1,4-glucan chains and the subsequent attachment of the oligosaccharide to the alpha-1,6 position. This Picrophilus torridus (strain ATCC 700027 / DSM 9790 / JCM 10055 / NBRC 100828 / KAW 2/3) protein is 1,4-alpha-glucan branching enzyme GlgB.